The following is a 345-amino-acid chain: tRNA N6-adenosine threonylcarbamoyltransferase (345 aa).

Positions 111 and 115 each coordinate Fe cation. Residues 134–138, D167, G180, and N277 each bind substrate; that span reads LVSGG. Fe cation is bound at residue D305.

This sequence belongs to the KAE1 / TsaD family. Fe(2+) is required as a cofactor.

It is found in the cytoplasm. The enzyme catalyses L-threonylcarbamoyladenylate + adenosine(37) in tRNA = N(6)-L-threonylcarbamoyladenosine(37) in tRNA + AMP + H(+). Its function is as follows. Required for the formation of a threonylcarbamoyl group on adenosine at position 37 (t(6)A37) in tRNAs that read codons beginning with adenine. Is involved in the transfer of the threonylcarbamoyl moiety of threonylcarbamoyl-AMP (TC-AMP) to the N6 group of A37, together with TsaE and TsaB. TsaD likely plays a direct catalytic role in this reaction. In Laribacter hongkongensis (strain HLHK9), this protein is tRNA N6-adenosine threonylcarbamoyltransferase.